We begin with the raw amino-acid sequence, 353 residues long: Small ribosomal subunit protein uS2 (353 aa).

Residues 256–353 (DTDEQSSAAN…TPAESTDEQA (98 aa)) form a disordered region. Low complexity-rich tracts occupy residues 263-311 (AANT…AEAP) and 321-339 (ESAT…TPAE). Over residues 340–353 (AEAETPAESTDEQA) the composition is skewed to acidic residues.

It belongs to the universal ribosomal protein uS2 family.

The chain is Small ribosomal subunit protein uS2 from Beutenbergia cavernae (strain ATCC BAA-8 / DSM 12333 / CCUG 43141 / JCM 11478 / NBRC 16432 / NCIMB 13614 / HKI 0122).